The primary structure comprises 623 residues: tRNA uridine 5-carboxymethylaminomethyl modification enzyme MnmG (623 aa).

10 to 15 (GGGHAG) lines the FAD pocket. 269-283 (GPRYCPSIEDKIVRF) is an NAD(+) binding site.

This sequence belongs to the MnmG family. As to quaternary structure, homodimer. Heterotetramer of two MnmE and two MnmG subunits. FAD serves as cofactor.

It localises to the cytoplasm. Its function is as follows. NAD-binding protein involved in the addition of a carboxymethylaminomethyl (cmnm) group at the wobble position (U34) of certain tRNAs, forming tRNA-cmnm(5)s(2)U34. The polypeptide is tRNA uridine 5-carboxymethylaminomethyl modification enzyme MnmG (Rhizobium meliloti (strain 1021) (Ensifer meliloti)).